The following is a 303-amino-acid chain: UDP-N-acetylenolpyruvoylglucosamine reductase (303 aa).

One can recognise an FAD-binding PCMH-type domain in the interval 32–212 (IGGKADLFLN…EQETKEYLAK (181 aa)). Arg176 is a catalytic residue. Ser226 serves as the catalytic Proton donor. The active site involves Glu296.

This sequence belongs to the MurB family. It depends on FAD as a cofactor.

It localises to the cytoplasm. It carries out the reaction UDP-N-acetyl-alpha-D-muramate + NADP(+) = UDP-N-acetyl-3-O-(1-carboxyvinyl)-alpha-D-glucosamine + NADPH + H(+). The protein operates within cell wall biogenesis; peptidoglycan biosynthesis. In terms of biological role, cell wall formation. The chain is UDP-N-acetylenolpyruvoylglucosamine reductase from Desulforamulus reducens (strain ATCC BAA-1160 / DSM 100696 / MI-1) (Desulfotomaculum reducens).